The sequence spans 594 residues: RAS guanyl-releasing protein 2-B (594 aa).

Residues 3-121 (SSDLDKGLTI…SLIDIESVPS (119 aa)) enclose the N-terminal Ras-GEF domain. In terms of domain architecture, Ras-GEF spans 149-382 (DPAELAEHLT…YQLSLQREPR (234 aa)). The tract at residues 377–403 (LQREPRARSTQTHAKSPPSPSPPLEEW) is disordered. 2 EF-hand domains span residues 418-453 (HIEKMVESVFRLFDEDGDGHISQEEFQSVRSNFPYL) and 455-482 (AFNEIDQNQDGKISKQEMTSYFLRASSV). Ca(2+) is bound by residues Asp431, Asp433, Asp435, His437, Glu442, Asp460, Asn462, Asp464, Lys466, and Glu471. The Phorbol-ester/DAG-type zinc finger occupies 490 to 540 (IHNFAERTFLRPVSCQHCRNLILGIYKKGLKCKACGITCHKHCRDHLSIEC).

It belongs to the RASGRP family.

The protein localises to the cytoplasm. It is found in the cytosol. The protein resides in the cell membrane. It localises to the synapse. Its subcellular location is the synaptosome. In terms of biological role, functions as a calcium- and DAG-regulated nucleotide exchange factor specifically activating Rap through the exchange of bound GDP for GTP. May function in cell aggregation and adhesion. The protein is RAS guanyl-releasing protein 2-B (rasgrp2-b) of Xenopus laevis (African clawed frog).